Here is a 129-residue protein sequence, read N- to C-terminus: uncharacterized protein (129 aa).

Residues 44 to 63 (PYRAADRSNDQDNDRSGGNV) form a disordered region. Residues 46-58 (RAADRSNDQDNDR) show a composition bias toward basic and acidic residues. The next 2 helical transmembrane spans lie at 78–98 (IISL…VGYI) and 109–129 (AWAM…IPFF).

It is found in the cell membrane. This is an uncharacterized protein from Bacillus subtilis (strain 168).